Reading from the N-terminus, the 274-residue chain is Undecaprenyl-diphosphatase (274 aa).

Transmembrane regions (helical) follow at residues 9–29, 47–67, 95–115, 120–140, 161–181, 197–217, 224–244, and 254–274; these read LEYL…FIPV, PGAS…AWYF, ILIG…FVPY, VLRS…FMYL, LIGF…GITI, FSFL…FISS, LGFF…LLAI, and NGLK…LLNL.

The protein belongs to the UppP family.

It is found in the cell inner membrane. It carries out the reaction di-trans,octa-cis-undecaprenyl diphosphate + H2O = di-trans,octa-cis-undecaprenyl phosphate + phosphate + H(+). Its function is as follows. Catalyzes the dephosphorylation of undecaprenyl diphosphate (UPP). Confers resistance to bacitracin. The protein is Undecaprenyl-diphosphatase of Prochlorococcus marinus (strain AS9601).